Consider the following 182-residue polypeptide: RNA chaperone ProQ (182 aa).

Residues 125–160 (EQRKEQRKDFFKKKAREERNAKTMNKAVKKGSPKKD) form a disordered region.

Belongs to the ProQ family.

Its subcellular location is the cytoplasm. In terms of biological role, RNA chaperone with significant RNA binding, RNA strand exchange and RNA duplexing activities. This Haemophilus ducreyi (strain 35000HP / ATCC 700724) protein is RNA chaperone ProQ.